A 1102-amino-acid chain; its full sequence is PAN2-PAN3 deadenylation complex catalytic subunit PAN2 (1102 aa).

WD repeat units lie at residues 20 to 59 (DYPRPATALAFDTIAELLWAGNDRGRVVSFYGRDLQRYTA), 104 to 144 (DEME…IVKQ), and 269 to 308 (NVMSFINLFEIAPSGEALAMADTECNIHLWGSPSKIHFTD). The segment at 308-445 (DMAIPIEMPK…STDELESLKP (138 aa)) is linker. The interval 423 to 442 (AVPDPKVEQVPESSTDELES) is disordered. The region spanning 446–833 (EAPPIYRNLE…LPAVLLFQVK (388 aa)) is the USP domain. In terms of domain architecture, Exonuclease spans 881–1054 (VGLDTEFVSL…EDARTALKLY (174 aa)). The a divalent metal cation site is built by aspartate 884, glutamate 886, aspartate 993, and aspartate 1046.

This sequence belongs to the peptidase C19 family. PAN2 subfamily. As to quaternary structure, forms a heterotrimer with an asymmetric homodimer of the regulatory subunit PAN3 to form the poly(A)-nuclease (PAN) deadenylation complex. A divalent metal cation is required as a cofactor.

It localises to the cytoplasm. It catalyses the reaction Exonucleolytic cleavage of poly(A) to 5'-AMP.. Positively regulated by the regulatory subunit PAN3. Catalytic subunit of the poly(A)-nuclease (PAN) deadenylation complex, one of two cytoplasmic mRNA deadenylases involved in mRNA turnover. PAN specifically shortens poly(A) tails of RNA and the activity is stimulated by poly(A)-binding protein PAB1. PAN deadenylation is followed by rapid degradation of the shortened mRNA tails by the CCR4-NOT complex. Deadenylated mRNAs are then degraded by two alternative mechanisms, namely exosome-mediated 3'-5' exonucleolytic degradation, or deadenylation-dependent mRNA decaping and subsequent 5'-3' exonucleolytic degradation by XRN1. May also be involved in post-transcriptional maturation of mRNA poly(A) tails. This chain is PAN2-PAN3 deadenylation complex catalytic subunit PAN2, found in Chaetomium globosum (strain ATCC 6205 / CBS 148.51 / DSM 1962 / NBRC 6347 / NRRL 1970) (Soil fungus).